We begin with the raw amino-acid sequence, 352 residues long: GTPase Obg (352 aa).

The 159-residue stretch at 1–159 folds into the Obg domain; the sequence is MSFIDEAKVF…FPIFMQLKVL (159 aa). An OBG-type G domain is found at 160-327; the sequence is SDIGIIGMPN…VMLYEMLQKD (168 aa). GTP-binding positions include 166–173, 191–195, 212–215, 279–282, and 308–310; these read GMPNAGKS, FTTLE, DIPG, NKCD, and SLD. Mg(2+)-binding residues include serine 173 and threonine 193.

It belongs to the TRAFAC class OBG-HflX-like GTPase superfamily. OBG GTPase family. As to quaternary structure, monomer. Requires Mg(2+) as cofactor.

It localises to the cytoplasm. In terms of biological role, an essential GTPase which binds GTP, GDP and possibly (p)ppGpp with moderate affinity, with high nucleotide exchange rates and a fairly low GTP hydrolysis rate. Plays a role in control of the cell cycle, stress response, ribosome biogenesis and in those bacteria that undergo differentiation, in morphogenesis control. In Anaplasma phagocytophilum (strain HZ), this protein is GTPase Obg.